A 101-amino-acid chain; its full sequence is Ubiquitin-like protein SMT3 (101 aa).

S2 is modified (N-acetylserine). Phosphoserine occurs at positions 2 and 4. One can recognise a Ubiquitin-like domain in the interval 22-98; the sequence is THINLKVSDG…IEAHREQIGG (77 aa). G98 is covalently cross-linked (Glycyl lysine isopeptide (Gly-Lys) (interchain with K-? in acceptor proteins)). The propeptide occupies 99 to 101; it reads ATY.

This sequence belongs to the ubiquitin family. SUMO subfamily. In terms of assembly, activated by a E1 ligase composed of AOS1 and UBA2.

Its function is as follows. Not known; suppressor of MIF2 mutations. This is Ubiquitin-like protein SMT3 (SMT3) from Saccharomyces cerevisiae (strain ATCC 204508 / S288c) (Baker's yeast).